The sequence spans 518 residues: Bifunctional purine biosynthesis protein PurH (518 aa).

One can recognise an MGS-like domain in the interval 1–144; that stretch reads MNRRAVLSVS…KNQERVSIVV (144 aa).

This sequence belongs to the PurH family.

It catalyses the reaction (6R)-10-formyltetrahydrofolate + 5-amino-1-(5-phospho-beta-D-ribosyl)imidazole-4-carboxamide = 5-formamido-1-(5-phospho-D-ribosyl)imidazole-4-carboxamide + (6S)-5,6,7,8-tetrahydrofolate. The catalysed reaction is IMP + H2O = 5-formamido-1-(5-phospho-D-ribosyl)imidazole-4-carboxamide. It functions in the pathway purine metabolism; IMP biosynthesis via de novo pathway; 5-formamido-1-(5-phospho-D-ribosyl)imidazole-4-carboxamide from 5-amino-1-(5-phospho-D-ribosyl)imidazole-4-carboxamide (10-formyl THF route): step 1/1. Its pathway is purine metabolism; IMP biosynthesis via de novo pathway; IMP from 5-formamido-1-(5-phospho-D-ribosyl)imidazole-4-carboxamide: step 1/1. In Desulfitobacterium hafniense (strain DSM 10664 / DCB-2), this protein is Bifunctional purine biosynthesis protein PurH.